The primary structure comprises 264 residues: 14-3-3-like protein GF14-A (264 aa).

A disordered region spans residues 245–264 (DMQDDGGDEMRDATKPEDEH). Basic and acidic residues predominate over residues 252-264 (DEMRDATKPEDEH).

This sequence belongs to the 14-3-3 family.

Its function is as follows. Is associated with a DNA binding complex that binds to the G box, a well-characterized cis-acting DNA regulatory element found in plant genes. The sequence is that of 14-3-3-like protein GF14-A (GF14A) from Oryza sativa subsp. japonica (Rice).